Reading from the N-terminus, the 266-residue chain is Ribosomal RNA small subunit methyltransferase A (266 aa).

6 residues coordinate S-adenosyl-L-methionine: Asn11, Leu13, Gly37, Glu57, Asp85, and Asn104.

It belongs to the class I-like SAM-binding methyltransferase superfamily. rRNA adenine N(6)-methyltransferase family. RsmA subfamily.

The protein resides in the cytoplasm. The enzyme catalyses adenosine(1518)/adenosine(1519) in 16S rRNA + 4 S-adenosyl-L-methionine = N(6)-dimethyladenosine(1518)/N(6)-dimethyladenosine(1519) in 16S rRNA + 4 S-adenosyl-L-homocysteine + 4 H(+). Its function is as follows. Specifically dimethylates two adjacent adenosines (A1518 and A1519) in the loop of a conserved hairpin near the 3'-end of 16S rRNA in the 30S particle. May play a critical role in biogenesis of 30S subunits. The sequence is that of Ribosomal RNA small subunit methyltransferase A from Campylobacter jejuni subsp. jejuni serotype O:2 (strain ATCC 700819 / NCTC 11168).